Consider the following 68-residue polypeptide: Large ribosomal subunit protein bL35 (68 aa).

The protein belongs to the bacterial ribosomal protein bL35 family.

This Pelagibacter ubique (strain HTCC1062) protein is Large ribosomal subunit protein bL35.